We begin with the raw amino-acid sequence, 511 residues long: Alpha-amylase 1 (511 aa).

An N-terminal signal peptide occupies residues 1–15 (MKFFLLLSLIGFCWA). At Gln16 the chain carries Pyrrolidone carboxylic acid. 3 cysteine pairs are disulfide-bonded: Cys43/Cys101, Cys85/Cys130, and Cys156/Cys175. Ca(2+) contacts are provided by Asn115, Arg173, and Asp182. Residue Arg210 coordinates chloride. The active-site Nucleophile is the Asp212. His216 serves as a coordination point for Ca(2+). Glu248 functions as the Proton donor in the catalytic mechanism. Chloride-binding residues include Asn313 and Arg352. Cystine bridges form between Cys393/Cys399 and Cys465/Cys477.

The protein belongs to the glycosyl hydrolase 13 family. As to quaternary structure, monomer. It depends on Ca(2+) as a cofactor. Chloride serves as cofactor. In terms of tissue distribution, expressed in liver and saliva.

The protein localises to the secreted. It catalyses the reaction Endohydrolysis of (1-&gt;4)-alpha-D-glucosidic linkages in polysaccharides containing three or more (1-&gt;4)-alpha-linked D-glucose units.. This chain is Alpha-amylase 1 (Amy1), found in Mus musculus (Mouse).